The primary structure comprises 287 residues: Urease accessory protein UreD (287 aa).

The protein belongs to the UreD family. In terms of assembly, ureD, UreF and UreG form a complex that acts as a GTP-hydrolysis-dependent molecular chaperone, activating the urease apoprotein by helping to assemble the nickel containing metallocenter of UreC. The UreE protein probably delivers the nickel.

It localises to the cytoplasm. In terms of biological role, required for maturation of urease via the functional incorporation of the urease nickel metallocenter. In Herpetosiphon aurantiacus (strain ATCC 23779 / DSM 785 / 114-95), this protein is Urease accessory protein UreD.